Here is a 279-residue protein sequence, read N- to C-terminus: Tryptophan synthase alpha chain (279 aa).

Active-site proton acceptor residues include glutamate 50 and aspartate 61.

The protein belongs to the TrpA family. Tetramer of two alpha and two beta chains.

The catalysed reaction is (1S,2R)-1-C-(indol-3-yl)glycerol 3-phosphate + L-serine = D-glyceraldehyde 3-phosphate + L-tryptophan + H2O. It functions in the pathway amino-acid biosynthesis; L-tryptophan biosynthesis; L-tryptophan from chorismate: step 5/5. Its function is as follows. The alpha subunit is responsible for the aldol cleavage of indoleglycerol phosphate to indole and glyceraldehyde 3-phosphate. The chain is Tryptophan synthase alpha chain from Brucella ovis (strain ATCC 25840 / 63/290 / NCTC 10512).